We begin with the raw amino-acid sequence, 705 residues long: Ribosomal RNA large subunit methyltransferase K/L (705 aa).

The THUMP domain maps to 43-154; sequence VVYRCCLWSR…GEKGILGFDL (112 aa).

The protein belongs to the methyltransferase superfamily. RlmKL family.

It localises to the cytoplasm. The enzyme catalyses guanosine(2445) in 23S rRNA + S-adenosyl-L-methionine = N(2)-methylguanosine(2445) in 23S rRNA + S-adenosyl-L-homocysteine + H(+). The catalysed reaction is guanosine(2069) in 23S rRNA + S-adenosyl-L-methionine = N(2)-methylguanosine(2069) in 23S rRNA + S-adenosyl-L-homocysteine + H(+). Functionally, specifically methylates the guanine in position 2445 (m2G2445) and the guanine in position 2069 (m7G2069) of 23S rRNA. The polypeptide is Ribosomal RNA large subunit methyltransferase K/L (Aliivibrio fischeri (strain ATCC 700601 / ES114) (Vibrio fischeri)).